Consider the following 147-residue polypeptide: Hemoglobin subunit beta (147 aa).

Positions 3–147 (EWTDKERSII…VVSALGKQYH (145 aa)) constitute a Globin domain. Residues His-64 and His-93 each coordinate heme b.

It belongs to the globin family. In terms of assembly, heterotetramer of two alpha chains and two beta chains. As to expression, red blood cells.

Functionally, involved in oxygen transport from gills to the various peripheral tissues. This chain is Hemoglobin subunit beta (hbb), found in Trematomus hansoni (Striped rockcod).